The chain runs to 63 residues: Large ribosomal subunit protein uL29 (63 aa).

The protein belongs to the universal ribosomal protein uL29 family.

The chain is Large ribosomal subunit protein uL29 from Azotobacter vinelandii (strain DJ / ATCC BAA-1303).